The chain runs to 199 residues: Transgelin-2 (199 aa).

Ala2 carries the post-translational modification N-acetylalanine. Position 11 is a phosphoserine (Ser11). Residues Lys17 and Lys20 each carry the N6-acetyllysine modification. The Calponin-homology (CH) domain maps to 24–136 (PDLEQILIQW…RTLMNLGGLA (113 aa)). Ser163 is subject to Phosphoserine. A Glycyl lysine isopeptide (Lys-Gly) (interchain with G-Cter in SUMO2) cross-link involves residue Lys171. One copy of the Calponin-like repeat lies at 174-199 (IGLQMGTNRGASQAGMTGYGMPRQIL). At Thr180 the chain carries Phosphothreonine. Residues Arg182 and Arg196 each carry the omega-N-methylarginine modification.

The protein belongs to the calponin family.

The polypeptide is Transgelin-2 (Tagln2) (Rattus norvegicus (Rat)).